Here is a 989-residue protein sequence, read N- to C-terminus: Bifunctional glutamine synthetase adenylyltransferase/adenylyl-removing enzyme (989 aa).

Positions 1 to 474 are adenylyl removase; the sequence is MNSSAIDADI…HYGKLFEGDP (474 aa). The adenylyl transferase stretch occupies residues 480–989; sequence LPIDYAGGPD…FNRLIGGDSA (510 aa).

The protein belongs to the GlnE family. Mg(2+) serves as cofactor.

It carries out the reaction [glutamine synthetase]-O(4)-(5'-adenylyl)-L-tyrosine + phosphate = [glutamine synthetase]-L-tyrosine + ADP. The enzyme catalyses [glutamine synthetase]-L-tyrosine + ATP = [glutamine synthetase]-O(4)-(5'-adenylyl)-L-tyrosine + diphosphate. Involved in the regulation of glutamine synthetase GlnA, a key enzyme in the process to assimilate ammonia. When cellular nitrogen levels are high, the C-terminal adenylyl transferase (AT) inactivates GlnA by covalent transfer of an adenylyl group from ATP to specific tyrosine residue of GlnA, thus reducing its activity. Conversely, when nitrogen levels are low, the N-terminal adenylyl removase (AR) activates GlnA by removing the adenylyl group by phosphorolysis, increasing its activity. The regulatory region of GlnE binds the signal transduction protein PII (GlnB) which indicates the nitrogen status of the cell. The sequence is that of Bifunctional glutamine synthetase adenylyltransferase/adenylyl-removing enzyme from Rhodopseudomonas palustris (strain BisB5).